Reading from the N-terminus, the 355-residue chain is LIM/homeobox protein lim-4 (355 aa).

2 LIM zinc-binding domains span residues 96 to 155 (VICT…THVT) and 166 to 228 (PKCA…LVEG). A DNA-binding region (homeobox) is located at residues 239–298 (TKRVRTTFAEDQLSVLQTYFNRDSNPDGADLEKIASMTGLSKRVTQVWFQNSRARQKKWH). The disordered stretch occupies residues 291-336 (RARQKKWHQKSEGDNGDSQRSSVGPSSPSQKSDSSSEMMYPTSVTT). The span at 306 to 326 (GDSQRSSVGPSSPSQKSDSSS) shows a compositional bias: low complexity.

In terms of assembly, interacts with transcription factor sox-2. As to expression, expressed in the AWB sensory neurons and in one RME motor neuron (RMEV), two RMD motor neurons (RMDL and RMDR), the RID, RIV, SAA and SIA interneurons and the SMB sensory/inter/motor neurons.

It is found in the nucleus. In terms of biological role, transcription factor that binds to the promoter of target genes. Regulates genes involved in serotonin synthesis and release in serotonergic ADF neurons. Involved in specification of neuron cell fate, olfactory receptor expression, locomotion, and foraging behavior. Required in AWB olfactory neurons to repress AWC cell fate and promote the AWB cell fate during early development. Cooperates with additional factors to direct the differentiation of the olfactory neurons, functioning with the transcription factor sox-2 to suppress AWC terminal differentiation and promote AWB neuron differentiation. Involved in regulating terminal specification and maintenance of the SMB sensory/inter/motor neurons. Plays a role in regulation of RID motor neuron differentiation, but is dispensable for motor axon outgrowth in the dorsal nerve cord. May regulate its own expression. The protein is LIM/homeobox protein lim-4 of Caenorhabditis elegans.